The following is a 519-amino-acid chain: NADH-quinone oxidoreductase subunit N (519 aa).

The next 13 helical transmembrane spans lie at 14–34 (LLPAIIMVVGASILLLSEVFL), 44–64 (AVLTVVTAVAAGAMALTTMFE), 82–102 (FLTFVVCVGLGLATLSSVSFL), 117–137 (LFASAGMSLLAMSNELITLFV), 167–187 (FILGAFSSAVLLYGAALLYGA), 209–229 (GLVYAGIILVITGFAFKVAAV), 249–269 (LMSVGVKAAAFAAMVRVFFMV), 278–298 (LLGLFSVLAFLTMVAGNLLAI), 307–327 (LAYSSIAHAGYLLVGVAALFV), 359–379 (ILYYLLAYTFSAVGAFAIVSV), 407–427 (WAFAMAAFMLSLGGIPPTIGF), 431–451 (LLIFQAAVDAGLIGLTIVGVL), and 487–507 (LALVLSTAAVVILGIIPGPIM).

The protein belongs to the complex I subunit 2 family. NDH-1 is composed of 14 different subunits. Subunits NuoA, H, J, K, L, M, N constitute the membrane sector of the complex.

The protein resides in the cell inner membrane. The enzyme catalyses a quinone + NADH + 5 H(+)(in) = a quinol + NAD(+) + 4 H(+)(out). Functionally, NDH-1 shuttles electrons from NADH, via FMN and iron-sulfur (Fe-S) centers, to quinones in the respiratory chain. The immediate electron acceptor for the enzyme in this species is believed to be ubiquinone. Couples the redox reaction to proton translocation (for every two electrons transferred, four hydrogen ions are translocated across the cytoplasmic membrane), and thus conserves the redox energy in a proton gradient. This chain is NADH-quinone oxidoreductase subunit N, found in Myxococcus xanthus (strain DK1622).